The following is a 242-amino-acid chain: RNA polymerase sigma factor for flagellar operon (242 aa).

The short motif at 55 to 68 (DMQQIGLIALVEAG) is the Polymerase core binding element. Positions 211–230 (LHEIALVLDLTPPRICQLHK) form a DNA-binding region, H-T-H motif.

It belongs to the sigma-70 factor family.

Its function is as follows. Sigma factors are initiation factors that promote the attachment of RNA polymerase to specific initiation sites and are then released. This alternative sigma factor is specific for the flagellin gene (fliC) expression. This is RNA polymerase sigma factor for flagellar operon (lafS) from Vibrio parahaemolyticus serotype O3:K6 (strain RIMD 2210633).